Reading from the N-terminus, the 1382-residue chain is DNA-directed RNA polymerase subunit beta (1382 aa).

This sequence belongs to the RNA polymerase beta chain family. As to quaternary structure, the RNAP catalytic core consists of 2 alpha, 1 beta, 1 beta' and 1 omega subunit. When a sigma factor is associated with the core the holoenzyme is formed, which can initiate transcription.

The enzyme catalyses RNA(n) + a ribonucleoside 5'-triphosphate = RNA(n+1) + diphosphate. In terms of biological role, DNA-dependent RNA polymerase catalyzes the transcription of DNA into RNA using the four ribonucleoside triphosphates as substrates. This is DNA-directed RNA polymerase subunit beta from Anaplasma marginale (strain Florida).